Here is a 1007-residue protein sequence, read N- to C-terminus: Tolloid-like protein 1 (1007 aa).

An N-terminal signal peptide occupies residues 1–25; the sequence is MNMPSWLIFLLTGWTFCGNFFACGG. The propeptide occupies 26 to 142; that stretch reads LDYDYPNYEN…GKSKKIRIPR (117 aa). The interval 115–139 is disordered; it reads SGQENTTANSQKVDNNQSGKSKKIR. Polar residues predominate over residues 116-133; the sequence is GQENTTANSQKVDNNQSG. In terms of domain architecture, Peptidase M12A spans 143–342; that stretch reads AATSRTERIW…AQARKLYRCP (200 aa). An N-linked (GlcNAc...) asparagine glycan is attached at N164. Disulfide bonds link C185-C341, C205-C227, C207-C208, and C344-C370. H235 contributes to the Zn(2+) binding site. E236 is a catalytic residue. Residues H239 and H245 each contribute to the Zn(2+) site. CUB domains follow at residues 344 to 456 and 457 to 569; these read CGET…YEAI and CGGE…FLKE. 2 N-linked (GlcNAc...) asparagine glycosylation sites follow: N354 and N385. 15 disulfides stabilise this stretch: C397/C419, C457/C483, C510/C532, C573/C585, C581/C594, C596/C609, C613/C639, C666/C688, C729/C740, C736/C749, C751/C764, C769/C795, C822/C844, C882/C912, and C939/C961. Residues 569 to 610 form the EGF-like 1; calcium-binding domain; the sequence is EEDECARPDNGGCEQRCVNTLGSYKCSCDPGYELAPDKKSCE. The CUB 3 domain occupies 613 to 725; it reads CGGLLTKLNG…KGFRAHFFSD (113 aa). N621 is a glycosylation site (N-linked (GlcNAc...) asparagine). Residues 725–765 form the EGF-like 2; calcium-binding domain; that stretch reads DKDECSKDNGGCQHECINTIGSYVCQCRNGFVLHDNKHDCK. CUB domains follow at residues 769-881 and 882-998; these read CEHR…HSTE and CGGR…YRSV.

Requires Zn(2+) as cofactor.

The protein localises to the secreted. Functionally, protease which processes procollagen C-propeptides, such as chordin. Required for the embryonic development. Predominant protease, which in the development, influences dorsal-ventral patterning and skeletogenesis. The sequence is that of Tolloid-like protein 1 (tll1) from Xenopus laevis (African clawed frog).